A 595-amino-acid polypeptide reads, in one-letter code: Sorting nexin-9 (595 aa).

The SH3 domain occupies 1-62 (MATKARVMYD…PTDYVEILPS (62 aa)). The disordered stretch occupies residues 91-201 (SSSAASNNHQ…GNSRASSSSM (111 aa)). Composition is skewed to polar residues over residues 111 to 121 (WSASKSGNWES) and 135 to 145 (QRNTNTPNNWD). Phosphoserine is present on residues serine 116 and serine 121. The segment covering 160–169 (GDDDDWDEDW) has biased composition (acidic residues). The span at 191 to 201 (RGNSRASSSSM) shows a compositional bias: polar residues. 2 positions are modified to phosphoserine: serine 197 and serine 200. Residues 201–213 (MKIPLNKFPGFAK) are critical for tubulation activity. Phosphothreonine is present on threonine 216. Residue tyrosine 239 is modified to Phosphotyrosine. A PX domain is found at 250-361 (FDCVVADPRK…QFLNFRDEKE (112 aa)). A 1,2-diacyl-sn-glycero-3-phospho-(1D-myo-inositol-4,5-bisphosphate) contacts are provided by arginine 286, lysine 288, and arginine 327. Lysine 288 carries the N6-acetyllysine modification. A BAR domain is found at 392–595 (LVEIEQKCEA…RQALSRFPVM (204 aa)).

Belongs to the sorting nexin family. In terms of assembly, homodimer, and homooligomer. Heterodimer with SNX18. Interacts with ITCH. Interacts (via SH3 domain) with TNK2, WASL and ACTR3. Identified in a complex with TNK2 and clathrin heavy chains. Identified in a complex with the AP-2 complex, clathrin and DNM2. Interacts (via SH3 domain) with DNM1 and DNM2. Identified in an oligomeric complex containing DNM1 and SNX9. Interacts with FCHSD1. Interacts with ADAM9 and ADAM15 cytoplasmic tails. In terms of processing, ubiquitinated by ITCH. Phosphorylated on tyrosine residues by TNK2. Phosphorylation promotes its activity in the degradation of EGFR. As to expression, widely expressed, with highest levels in heart and placenta, and lowest levels in thymus and peripheral blood leukocytes.

It is found in the cytoplasmic vesicle membrane. The protein resides in the cell membrane. The protein localises to the cytoplasmic vesicle. Its subcellular location is the clathrin-coated vesicle. It localises to the golgi apparatus. It is found in the trans-Golgi network. The protein resides in the cell projection. The protein localises to the ruffle. Its subcellular location is the cytoplasm. Functionally, involved in endocytosis and intracellular vesicle trafficking, both during interphase and at the end of mitosis. Required for efficient progress through mitosis and cytokinesis. Required for normal formation of the cleavage furrow at the end of mitosis. Plays a role in endocytosis via clathrin-coated pits, but also clathrin-independent, actin-dependent fluid-phase endocytosis. Plays a role in macropinocytosis. Promotes internalization of TNFR. Promotes degradation of EGFR after EGF signaling. Stimulates the GTPase activity of DNM1. Promotes DNM1 oligomerization. Promotes activation of the Arp2/3 complex by WASL, and thereby plays a role in the reorganization of the F-actin cytoskeleton. Binds to membranes enriched in phosphatidylinositol 4,5-bisphosphate and promotes membrane tubulation. Has lower affinity for membranes enriched in phosphatidylinositol 3-phosphate. The chain is Sorting nexin-9 (SNX9) from Homo sapiens (Human).